Here is a 190-residue protein sequence, read N- to C-terminus: MKHHSLIFLTGFSGSGKSTIGPLLANSLGYDFIDLDQAIEAITGKSVSRIFAEEGESYFRKLELDTLKTVTNREELIVSLGGGALESNECYTLIKEKGTLVYLKSGSGTLTKRLCHKTDRPLLKSEQGGKLSNGEIEQKIRELLARREPRYNSATITVQTDTGRIGSTVEELTRKINRYVRKTTGNSRAK.

An ATP-binding site is contributed by 14 to 19 (GSGKST). Ser18 contributes to the Mg(2+) binding site. 3 residues coordinate substrate: Asp36, Arg60, and Gly82. Residue Arg120 participates in ATP binding. Arg147 lines the substrate pocket.

It belongs to the shikimate kinase family. In terms of assembly, monomer. Requires Mg(2+) as cofactor.

The protein localises to the cytoplasm. The catalysed reaction is shikimate + ATP = 3-phosphoshikimate + ADP + H(+). The protein operates within metabolic intermediate biosynthesis; chorismate biosynthesis; chorismate from D-erythrose 4-phosphate and phosphoenolpyruvate: step 5/7. In terms of biological role, catalyzes the specific phosphorylation of the 3-hydroxyl group of shikimic acid using ATP as a cosubstrate. This chain is Shikimate kinase, found in Chlorobium phaeobacteroides (strain DSM 266 / SMG 266 / 2430).